Consider the following 184-residue polypeptide: UPF0301 protein RHOS4_26140 (184 aa).

Belongs to the UPF0301 (AlgH) family.

This Cereibacter sphaeroides (strain ATCC 17023 / DSM 158 / JCM 6121 / CCUG 31486 / LMG 2827 / NBRC 12203 / NCIMB 8253 / ATH 2.4.1.) (Rhodobacter sphaeroides) protein is UPF0301 protein RHOS4_26140.